Consider the following 314-residue polypeptide: Malate dehydrogenase (314 aa).

Residues 11 to 16 (GSGNIG) and Asp-35 each bind NAD(+). 2 residues coordinate substrate: Arg-84 and Arg-90. NAD(+)-binding positions include Asn-97 and 120–122 (ITN). Substrate-binding residues include Asn-122 and Arg-153. Catalysis depends on His-177, which acts as the Proton acceptor.

It belongs to the LDH/MDH superfamily. MDH type 3 family.

It catalyses the reaction (S)-malate + NAD(+) = oxaloacetate + NADH + H(+). Its function is as follows. Catalyzes the reversible oxidation of malate to oxaloacetate. The chain is Malate dehydrogenase from Rickettsia bellii (strain OSU 85-389).